The following is a 206-amino-acid chain: MRWSDSENNKIDYIEDFATHFLNKNALLNVICKFCVFRSNSDLWVMRPYQICATERILEKIKEDNRNSKNSKNASKGGCIWHSTGSGKTLTSFKAVQLASEIDFVDKVLFVVDRKDLDNQTIEEYEKFQAGSVSETENTNDLKEKILDDSTATRAIVTTIHKLKRLIDQRSKLKDEDLKKKNIVLIFDECHRSQFGKMKQEIDEFF.

In terms of biological role, the C-terminal section of a putative type I restriction enzyme that if reconstituted might recognize 5'-GAN(7)TAY-3' and cleave a random distance away. Subunit R is required for both nuclease and ATPase activities, but not for modification. This is Putative type I restriction enzyme MpnIIP endonuclease subunit C-terminal part from Mycoplasma pneumoniae (strain ATCC 29342 / M129 / Subtype 1) (Mycoplasmoides pneumoniae).